The following is a 216-amino-acid chain: Elongation factor Ts (216 aa).

An involved in Mg(2+) ion dislocation from EF-Tu region spans residues 81 to 84; that stretch reads TDFV.

This sequence belongs to the EF-Ts family.

The protein resides in the cytoplasm. Associates with the EF-Tu.GDP complex and induces the exchange of GDP to GTP. It remains bound to the aminoacyl-tRNA.EF-Tu.GTP complex up to the GTP hydrolysis stage on the ribosome. In Geobacter sp. (strain M21), this protein is Elongation factor Ts.